Consider the following 383-residue polypeptide: MKKFMNFFSSNEFLKMIMSTIYLPTPVNINYMWNFGSILGIFLMIQIISGFILSMHYCPNIDIAFWSITNIMKDMNSGWLFRLIHMNGASFYFLMMYIHISRNLFYCSYKLNNVWGIGIMILLMSMAAAFMGYVLPWGQMSYWGATVITNLLSAIPYIGDTIVLWIWGGFSINNATLNRFFSLHFILPLLILFMVILHLFALHLTGSSNPLGSNFNNYKISFHPYFSIKDLLGFYIILFIFMFINFQFPYHLGDPDNFKIANPMNTPTHIKPEWYFLFAYSILRAIPNKLGGVIGLVMSILILYIMIFYNNKMMNNKFNMLNKIYYWMFINNFILLTWLGKQLIEYPFTNINMLFTTTYFLYFFLNFYLSKLWDNLIWNSPLN.

4 helical membrane passes run Phe-35–Met-55, Trp-79–Ile-100, Trp-115–Leu-135, and Phe-180–Phe-200. Residues His-85 and His-99 each coordinate heme b. Positions 184 and 198 each coordinate heme b. Position 203 (His-203) interacts with a ubiquinone. The next 4 helical transmembrane spans lie at Ile-228–Phe-248, Leu-290–Asn-310, Leu-321–Lys-341, and Phe-348–Tyr-368.

This sequence belongs to the cytochrome b family. In terms of assembly, the main subunits of complex b-c1 are: cytochrome b, cytochrome c1 and the Rieske protein. Requires heme b as cofactor.

It is found in the mitochondrion inner membrane. Component of the ubiquinol-cytochrome c reductase complex (complex III or cytochrome b-c1 complex) that is part of the mitochondrial respiratory chain. The b-c1 complex mediates electron transfer from ubiquinol to cytochrome c. Contributes to the generation of a proton gradient across the mitochondrial membrane that is then used for ATP synthesis. This is Cytochrome b (MT-CYB) from Apis mellifera ligustica (Common honeybee).